We begin with the raw amino-acid sequence, 67 residues long: Photosystem II reaction center protein H (67 aa).

The helical transmembrane segment at 27-47 threads the bilayer; sequence GAVPVMAFIGVLLLVFLVILL.

This sequence belongs to the PsbH family. As to quaternary structure, PSII is composed of 1 copy each of membrane proteins PsbA, PsbB, PsbC, PsbD, PsbE, PsbF, PsbH, PsbI, PsbJ, PsbK, PsbL, PsbM, PsbT, PsbX, PsbY, Psb30/Ycf12, peripheral proteins PsbO, CyanoQ (PsbQ), PsbU, PsbV and a large number of cofactors. It forms dimeric complexes.

It localises to the cellular thylakoid membrane. Its function is as follows. One of the components of the core complex of photosystem II (PSII), required for its stability and/or assembly. PSII is a light-driven water:plastoquinone oxidoreductase that uses light energy to abstract electrons from H(2)O, generating O(2) and a proton gradient subsequently used for ATP formation. It consists of a core antenna complex that captures photons, and an electron transfer chain that converts photonic excitation into a charge separation. The chain is Photosystem II reaction center protein H from Prochlorococcus marinus (strain MIT 9211).